The primary structure comprises 428 residues: Enolase (428 aa).

(2R)-2-phosphoglycerate is bound at residue Gln-164. Residue Glu-208 is the Proton donor of the active site. Mg(2+) contacts are provided by Asp-245, Glu-286, and Asp-313. Lys-338, Arg-367, Ser-368, and Lys-389 together coordinate (2R)-2-phosphoglycerate. Lys-338 functions as the Proton acceptor in the catalytic mechanism.

It belongs to the enolase family. Mg(2+) serves as cofactor.

The protein localises to the cytoplasm. The protein resides in the secreted. Its subcellular location is the cell surface. It carries out the reaction (2R)-2-phosphoglycerate = phosphoenolpyruvate + H2O. It functions in the pathway carbohydrate degradation; glycolysis; pyruvate from D-glyceraldehyde 3-phosphate: step 4/5. In terms of biological role, catalyzes the reversible conversion of 2-phosphoglycerate (2-PG) into phosphoenolpyruvate (PEP). It is essential for the degradation of carbohydrates via glycolysis. The sequence is that of Enolase from Pyrococcus abyssi (strain GE5 / Orsay).